A 1234-amino-acid chain; its full sequence is ATP-dependent helicase/nuclease subunit A (1234 aa).

Residues T2–T475 form the UvrD-like helicase ATP-binding domain. A23 to T30 contacts ATP. The 300-residue stretch at Y507–G806 folds into the UvrD-like helicase C-terminal domain.

Belongs to the helicase family. AddA subfamily. Heterodimer of AddA and AddB/RexB. It depends on Mg(2+) as a cofactor.

The catalysed reaction is Couples ATP hydrolysis with the unwinding of duplex DNA by translocating in the 3'-5' direction.. It carries out the reaction ATP + H2O = ADP + phosphate + H(+). Its function is as follows. The heterodimer acts as both an ATP-dependent DNA helicase and an ATP-dependent, dual-direction single-stranded exonuclease. Recognizes the chi site generating a DNA molecule suitable for the initiation of homologous recombination. The AddA nuclease domain is required for chi fragment generation; this subunit has the helicase and 3' -&gt; 5' nuclease activities. This Lacticaseibacillus paracasei (strain ATCC 334 / BCRC 17002 / CCUG 31169 / CIP 107868 / KCTC 3260 / NRRL B-441) (Lactobacillus paracasei) protein is ATP-dependent helicase/nuclease subunit A.